We begin with the raw amino-acid sequence, 428 residues long: Nocturnin (428 aa).

A mitochondrion-targeting transit peptide spans 1–72 (MYQSPRRLCS…PMGNGTSRLY (72 aa)). The tract at residues 21–66 (RRTLVPGPRRTLAPPVLGSRPASPQLQAAASGAARSRPRTVSPMGN) is disordered. Residues 39 to 55 (SRPASPQLQAAASGAAR) show a composition bias toward low complexity. Glu-192 provides a ligand contact to Mg(2+). Substrate contacts are provided by residues Glu-192, 216 to 218 (KPW), Asn-260, 283 to 286 (HLKA), and 321 to 323 (DFN). The interval 340 to 350 (NLNSAYKLLSP) is interaction with PPARG. His-411 is a binding site for substrate.

This sequence belongs to the CCR4/nocturin family. Interacts with PPARG. The cofactor is Mg(2+).

The protein resides in the cytoplasm. The protein localises to the nucleus. It localises to the perinuclear region. Its subcellular location is the mitochondrion. It carries out the reaction NADP(+) + H2O = phosphate + NAD(+). It catalyses the reaction NADPH + H2O = phosphate + NADH. Its function is as follows. Phosphatase which catalyzes the conversion of NADP(+) to NAD(+) and of NADPH to NADH. Shows a small preference for NADPH over NADP(+). Represses translation and promotes degradation of target mRNA molecules. Plays an important role in post-transcriptional regulation of metabolic genes under circadian control. Exerts a rhythmic post-transcriptional control of genes necessary for metabolic functions including nutrient absorption, glucose/insulin sensitivity, lipid metabolism, adipogenesis, inflammation and osteogenesis. Plays an important role in favoring adipogenesis over osteoblastogenesis and acts as a key regulator of the adipogenesis/osteogenesis balance. Promotes adipogenesis by facilitating PPARG nuclear translocation which activates its transcriptional activity. Regulates circadian expression of NOS2 in the liver and negatively regulates the circadian expression of IGF1 in the bone. Critical for proper development of early embryos. The protein is Nocturnin of Rattus norvegicus (Rat).